The sequence spans 572 residues: Proline--tRNA ligase (572 aa).

It belongs to the class-II aminoacyl-tRNA synthetase family. ProS type 1 subfamily. As to quaternary structure, homodimer.

The protein resides in the cytoplasm. The catalysed reaction is tRNA(Pro) + L-proline + ATP = L-prolyl-tRNA(Pro) + AMP + diphosphate. Functionally, catalyzes the attachment of proline to tRNA(Pro) in a two-step reaction: proline is first activated by ATP to form Pro-AMP and then transferred to the acceptor end of tRNA(Pro). As ProRS can inadvertently accommodate and process non-cognate amino acids such as alanine and cysteine, to avoid such errors it has two additional distinct editing activities against alanine. One activity is designated as 'pretransfer' editing and involves the tRNA(Pro)-independent hydrolysis of activated Ala-AMP. The other activity is designated 'posttransfer' editing and involves deacylation of mischarged Ala-tRNA(Pro). The misacylated Cys-tRNA(Pro) is not edited by ProRS. The protein is Proline--tRNA ligase of Haemophilus influenzae (strain PittGG).